The primary structure comprises 837 residues: Protein ROD1 (837 aa).

Phosphoserine is present on residues S138 and S141. K401 participates in a covalent cross-link: Glycyl lysine isopeptide (Lys-Gly) (interchain with G-Cter in ubiquitin). S436 is modified (phosphoserine). The PY-motif signature appears at 487–490 (PPNY). A Phosphoserine modification is found at S536. The PY-motif motif lies at 656–659 (PPAY). Disordered stretches follow at residues 675-726 (ERPQ…SVSL) and 763-837 (SFTS…RDRS). Over residues 685-703 (TSSLLPLPGSSKSSNNLKR) the composition is skewed to low complexity. The span at 716 to 726 (PRNNSGSSVSL) shows a compositional bias: polar residues. S720 and S725 each carry phosphoserine. Over residues 763–773 (SFTSNSSSKNN) the composition is skewed to low complexity. Over residues 774-792 (SHFDKTDSTSDANKPREEE) the composition is skewed to basic and acidic residues. Positions 805 to 815 (SSSVRSNNSNS) are enriched in low complexity.

The protein belongs to the arrestin family. As to quaternary structure, interacts with RSP5 via its 2 PY-motifs.

Its subcellular location is the membrane. In terms of biological role, mediates resistance to o-dinitrobenzene, calcium and zinc. This is Protein ROD1 (ROD1) from Saccharomyces cerevisiae (strain ATCC 204508 / S288c) (Baker's yeast).